Here is a 67-residue protein sequence, read N- to C-terminus: Conotoxin Lt5.9 (67 aa).

The first 19 residues, 1–19 (MLCLPVFIILLLLASPAAP), serve as a signal peptide directing secretion. Residues 20 to 46 (KSFETKVQSDLTRTDGNMETEENLGEV) constitute a propeptide that is removed on maturation.

The protein belongs to the conotoxin T superfamily. Post-translationally, contains 2 disulfide bonds that can be either 'C1-C3, C2-C4' or 'C1-C4, C2-C3', since these disulfide connectivities have been observed for conotoxins with cysteine framework V (for examples, see AC P0DQQ7 and AC P81755). In terms of tissue distribution, expressed by the venom duct.

The protein resides in the secreted. This chain is Conotoxin Lt5.9, found in Conus litteratus (Lettered cone).